A 514-amino-acid chain; its full sequence is Photosystem II CP47 reaction center protein (514 aa).

Helical transmembrane passes span 21–36 (AVHL…WAGS), 109–123 (IVLS…VWHW), 148–164 (GGHL…FGTF), 211–226 (IAAG…FHLT), 245–260 (ALAS…AFVV), and 465–480 (CFAL…HGAR).

Belongs to the PsbB/PsbC family. PsbB subfamily. In terms of assembly, PSII is composed of 1 copy each of membrane proteins PsbA, PsbB, PsbC, PsbD, PsbE, PsbF, PsbH, PsbI, PsbJ, PsbK, PsbL, PsbM, PsbT, PsbX, PsbY, PsbZ, Psb30/Ycf12, peripheral proteins PsbO, CyanoQ (PsbQ), PsbU, PsbV and a large number of cofactors. It forms dimeric complexes. It depends on Binds multiple chlorophylls. PSII binds additional chlorophylls, carotenoids and specific lipids. as a cofactor.

Its subcellular location is the cellular thylakoid membrane. Its function is as follows. One of the components of the core complex of photosystem II (PSII). It binds chlorophyll and helps catalyze the primary light-induced photochemical processes of PSII. PSII is a light-driven water:plastoquinone oxidoreductase, using light energy to abstract electrons from H(2)O, generating O(2) and a proton gradient subsequently used for ATP formation. This chain is Photosystem II CP47 reaction center protein, found in Prochlorothrix hollandica.